A 222-amino-acid polypeptide reads, in one-letter code: UPF0758 protein Mpe_A2695 (222 aa).

In terms of domain architecture, MPN spans 100–222; that stretch reads VFDSPQAVKD…VVSFAERGLL (123 aa). His171, His173, and Asp184 together coordinate Zn(2+). Positions 171–184 match the JAMM motif motif; sequence HNHPSGVAEPSRAD.

This sequence belongs to the UPF0758 family.

The chain is UPF0758 protein Mpe_A2695 from Methylibium petroleiphilum (strain ATCC BAA-1232 / LMG 22953 / PM1).